The primary structure comprises 255 residues: Myogenic factor 5 (255 aa).

Positions 83–134 (DRRKAATMRERRRLKKVNQAFDTLKRCTTTNPNQRLPKVEILRNAIRYIESL) constitute a bHLH domain. The disordered stretch occupies residues 217–249 (SEQPGLPLQDPASLSPVASTDSQPATPGASSSR). Residues 232–249 (PVASTDSQPATPGASSSR) show a composition bias toward polar residues.

Efficient DNA binding requires dimerization with another bHLH protein.

It localises to the nucleus. Functionally, acts as a transcriptional activator that promotes transcription of muscle-specific target genes and plays a role in muscle differentiation. Together with MYOG and MYOD1, co-occupies muscle-specific gene promoter core region during myogenesis. Induces fibroblasts to differentiate into myoblasts. Probable sequence specific DNA-binding protein. This is Myogenic factor 5 (MYF5) from Bos taurus (Bovine).